A 207-amino-acid polypeptide reads, in one-letter code: MKQNKINKKFVYLISPNKIPDINFYDDLALVLSSKKISFFQLRLKKETNLNKLIIGKKIKKICNKHKVKFLINDDPLLAKKLNADGCHLGQKDMDLIKARKILKNKIIGVTCHNSINLAKKAINDGADYLAFGAFYATKTKTVKYRASLTVLKSIKKITSLPIVAIGGIKLSNYKKLLLNKANFLAISGYIWNNKKYKPLEAIRKLK.

4-amino-2-methyl-5-(diphosphooxymethyl)pyrimidine contacts are provided by residues 41 to 45 and Asn-73; that span reads QLRLK. Positions 74 and 93 each coordinate Mg(2+). Thr-111 is a binding site for 4-amino-2-methyl-5-(diphosphooxymethyl)pyrimidine. Residue 138–140 coordinates 2-[(2R,5Z)-2-carboxy-4-methylthiazol-5(2H)-ylidene]ethyl phosphate; sequence TKT. Lys-141 is a binding site for 4-amino-2-methyl-5-(diphosphooxymethyl)pyrimidine. Position 168 (Gly-168) interacts with 2-[(2R,5Z)-2-carboxy-4-methylthiazol-5(2H)-ylidene]ethyl phosphate.

It belongs to the thiamine-phosphate synthase family. Mg(2+) is required as a cofactor.

The catalysed reaction is 2-[(2R,5Z)-2-carboxy-4-methylthiazol-5(2H)-ylidene]ethyl phosphate + 4-amino-2-methyl-5-(diphosphooxymethyl)pyrimidine + 2 H(+) = thiamine phosphate + CO2 + diphosphate. It catalyses the reaction 2-(2-carboxy-4-methylthiazol-5-yl)ethyl phosphate + 4-amino-2-methyl-5-(diphosphooxymethyl)pyrimidine + 2 H(+) = thiamine phosphate + CO2 + diphosphate. It carries out the reaction 4-methyl-5-(2-phosphooxyethyl)-thiazole + 4-amino-2-methyl-5-(diphosphooxymethyl)pyrimidine + H(+) = thiamine phosphate + diphosphate. It participates in cofactor biosynthesis; thiamine diphosphate biosynthesis; thiamine phosphate from 4-amino-2-methyl-5-diphosphomethylpyrimidine and 4-methyl-5-(2-phosphoethyl)-thiazole: step 1/1. Its function is as follows. Condenses 4-methyl-5-(beta-hydroxyethyl)thiazole monophosphate (THZ-P) and 2-methyl-4-amino-5-hydroxymethyl pyrimidine pyrophosphate (HMP-PP) to form thiamine monophosphate (TMP). The chain is Thiamine-phosphate synthase from Pelagibacter ubique (strain HTCC1062).